The chain runs to 660 residues: Bifunctional polymyxin resistance protein ArnA (660 aa).

Residues methionine 1–leucine 304 form a formyltransferase ArnAFT region. (6R)-10-formyltetrahydrofolate is bound at residue histidine 86–isoleucine 88. The active-site Proton donor; for formyltransferase activity is the histidine 104. (6R)-10-formyltetrahydrofolate contacts are provided by residues arginine 114 and valine 136–aspartate 140. Positions arginine 314 to serine 660 are dehydrogenase ArnADH. NAD(+) is bound by residues aspartate 347 and aspartate 368–isoleucine 369. UDP-alpha-D-glucuronate is bound by residues alanine 393, tyrosine 398, and threonine 432–serine 433. Residue glutamate 434 is the Proton acceptor; for decarboxylase activity of the active site. UDP-alpha-D-glucuronate is bound by residues arginine 460, asparagine 492, lysine 526–arginine 535, and tyrosine 613. Arginine 619 functions as the Proton donor; for decarboxylase activity in the catalytic mechanism.

The protein in the N-terminal section; belongs to the Fmt family. UDP-L-Ara4N formyltransferase subfamily. It in the C-terminal section; belongs to the NAD(P)-dependent epimerase/dehydratase family. UDP-glucuronic acid decarboxylase subfamily. As to quaternary structure, homohexamer, formed by a dimer of trimers.

The enzyme catalyses UDP-alpha-D-glucuronate + NAD(+) = UDP-beta-L-threo-pentopyranos-4-ulose + CO2 + NADH. It catalyses the reaction UDP-4-amino-4-deoxy-beta-L-arabinose + (6R)-10-formyltetrahydrofolate = UDP-4-deoxy-4-formamido-beta-L-arabinose + (6S)-5,6,7,8-tetrahydrofolate + H(+). It functions in the pathway nucleotide-sugar biosynthesis; UDP-4-deoxy-4-formamido-beta-L-arabinose biosynthesis; UDP-4-deoxy-4-formamido-beta-L-arabinose from UDP-alpha-D-glucuronate: step 1/3. The protein operates within nucleotide-sugar biosynthesis; UDP-4-deoxy-4-formamido-beta-L-arabinose biosynthesis; UDP-4-deoxy-4-formamido-beta-L-arabinose from UDP-alpha-D-glucuronate: step 3/3. It participates in bacterial outer membrane biogenesis; lipopolysaccharide biosynthesis. Bifunctional enzyme that catalyzes the oxidative decarboxylation of UDP-glucuronic acid (UDP-GlcUA) to UDP-4-keto-arabinose (UDP-Ara4O) and the addition of a formyl group to UDP-4-amino-4-deoxy-L-arabinose (UDP-L-Ara4N) to form UDP-L-4-formamido-arabinose (UDP-L-Ara4FN). The modified arabinose is attached to lipid A and is required for resistance to polymyxin and cationic antimicrobial peptides. The protein is Bifunctional polymyxin resistance protein ArnA of Shigella flexneri serotype 5b (strain 8401).